A 122-amino-acid polypeptide reads, in one-letter code: Ribonuclease P protein component (122 aa).

Belongs to the RnpA family. In terms of assembly, consists of a catalytic RNA component (M1 or rnpB) and a protein subunit.

The enzyme catalyses Endonucleolytic cleavage of RNA, removing 5'-extranucleotides from tRNA precursor.. Functionally, RNaseP catalyzes the removal of the 5'-leader sequence from pre-tRNA to produce the mature 5'-terminus. It can also cleave other RNA substrates such as 4.5S RNA. The protein component plays an auxiliary but essential role in vivo by binding to the 5'-leader sequence and broadening the substrate specificity of the ribozyme. This chain is Ribonuclease P protein component, found in Lactobacillus johnsonii (strain CNCM I-12250 / La1 / NCC 533).